The sequence spans 2339 residues: MMKKKNIDIEELKRLIEESSMKKRFVKDIKRNCEIKSIRFGIMSKEDIIKYSEVKIMNREMYKNNSGIPYPYGVLDLKLGAHKSNSVCETCNKKLINCSGHFGYIELNYPVFHIGYYKYIIHILYCICKYCSSLLLSKEKIDFYCNLKKKSTDDSFYKKHLFKRILNNCKKVNKCYICGNPQGVIKKIIKPSLDQFMKLKHILKVKENGKMIIKEEDLNSLYVLKLFKNINPYHVKLLNIENPEKLIITALLVPPNTIRPSVIIDEHGTAEDDLTCILSEITQLNNTIYNQCTNGYQTNQFLGNVEFLQLQITRFINSDSPAVSQLLATQNISKPGRGICQRLKGKEGRFRCNLSGKRVDFSSRTVISPDPNISIDEVVIPKIIAMRLTYPETVNKYNIDKLKMLIKNGCNKWPGANYIIKKSKKGTDPYSDISTSYNNNSNNISSIGCSNIFNVVNNYINNNCKNVRYNIKDVNNNVLLKDMCDINNMNNDINNNINNIYKNTSETNLCNVNNHNNNNNIYCNNQTQDNEEERKNSQFNKISLKYANKNHVIQNLNIGDVVERHICDGDIVLFNRQPSLHRMSIMCHKAKIMDFKTFRFNECVCSPYNADFDGDEMNLDVPQTEEARAEALYLMNVKHNLITPKNGEVIIALTQDFLSASYIITNKDTFLDRDTFCLLCSYFSDASLYIELPIPAILKPKELWTGKQLISVLIKPNKKENTIINFEIQEREYSNKFGDLKHLCLNDSYVCFYKSELICGSLGKKVLGSSKYGLFYYLIHHNSSHIALKIMNRLSKLTSRYFSNKGMTIGIDDVRPSQTLTEKKKDLLLKGYEKVNNEIILYNEKKMQIQPGCTLEETLEIKVKSILDDLRNDAGKTCNQYLHYLNKPLIMFNSGAKGALINIAQMIACVGQQNVAGQRIQNGFINRTLPHFHFHCKDSESRGFVQNSFYTGLSPTEFFFHTMSGREGLVDTAVKTAETGYMQRRLMKALEDLSIHYDYSVRSCDKQIVQFIYGDDALNPSYIDNNNTYLDQFDKVFDHIVSISSSHLLLSYKNKIPYLPHVQHQNKTSNMNNIYNNMNNINNNDSNRSIIYNNDSNMNNINNNDSNMNSIHNNNSNMNNIHNNDSNRSIIHNNDSNMNSIHNNDSNMNSIHNNNSNMNNIHNNDSNRSIIHNNDSNMNSIHNNDSNNNNNYKDCTHNPYICNESLIIRNIMNRLIYQNIAQEDLFIPLEHDEFLVNKIMESYTDQECNYEDIIRSLDLNKNVSYIHNDQGKHLSLQMCAEEHITINNTNNDNTYVEQIEMKELSKNKTKEKQSFKGTIRDMHEDSEEQMNKFITKKAKFFIEKKKGKMHECNDDIEYNNTQYDNIQYNNISCNYIKSQNLENTHHQVNNDLSFIKNNVILPPKEYHSIFHFVNDYRNVVEIKNLMDKKKIFLNNSEKNVVQSKYNRMSKNLKKKIEIINNIYRNEKKKLNRWKTKMDNDDNYWSSDDDSIIAKKIIKIKNKEKRKYHPKEEKENFDRNNYKMITDNNNNDNNNNNNDNNNNDNNNNNNNSNNNNYYYNLHDDVNNLGVTNYNTNIYPNDCNGIYEKETNNNELTTNSNMCDKNNDFSDEFFNNINENDLLYDNKYYRQIFKNVIGFVSVFEYVESYKQHYILFPYEIIKWTSFLLEYLTEIIPTNIFLHTKLSKKEKPTHQKNTGKMKIYIEEIKKWLFIKAINIYKYFSFKKSIELIKKKDYFNYIIKNYDISHRYIIHDYSFINLKQLYLFIFFNIYKYFKYISTPGDAVGSISAQSIGEPGTQMTLKTFHFAGVASMNVTLGVPRIKEIINASNSIQTPILNIPLEVNDNYNFALMMKSKLEKTTIRDICMYIKEDYTSRGVFLSVKFNEELIQKLFLNINAYNIKDIILKQSHINKIKINKIHINVINKYKLHISLKNDEFIFFQMESLKKGLLDLLIYGDKDIKRCIIKKEDIEVTDNEDEICDDMDEYYNVSQGTELYERKCNSKEENKNAIRVKKEEIDDNLEKEENIIYVSEKDSVNQLKSEKKKDINDDNNNNDDNNNNNDDDNKINDTIFNDDIDSDRNNLKENGSKLENVGEHIIERLSYKMKEKNVKKEHIKKEPNLINLDTINLDTLNFDEINVHNINNEKIEFYDEHLNICQGNKKHIQKKKKKKTVYSILVEGNSLNYVLGLEGVDFKHIISNHVINVFQVLGIEAARITIINEIKKCVEAYSIDIDIRHIMLLADIMAFTGDILGINRFGIQKARQSTLMLASFEETNEHLFVSSFFKNVDEINNISESIIVGKNIPIGTGAFQLLYDYKLEKETKNLTLLEKAERETAMNY.

Residues C88, C91, C98, H101, C128, C131, and C175 each contribute to the Zn(2+) site. Mg(2+)-binding residues include D611, D613, and D615. Residues 955–967 (PTEFFFHTMSGRE) are bridging helix. 2 disordered regions span residues 1503–1557 (EKRK…NNYY) and 2038–2079 (LKSE…DSDR). The span at 1509-1520 (PKEEKENFDRNN) shows a compositional bias: basic and acidic residues. Low complexity predominate over residues 1521–1557 (YKMITDNNNNDNNNNNNDNNNNDNNNNNNNSNNNNYY). Residues 2038–2047 (LKSEKKKDIN) are compositionally biased toward basic and acidic residues. Over residues 2049 to 2059 (DNNNNDDNNNN) the composition is skewed to low complexity.

The protein belongs to the RNA polymerase beta' chain family. As to quaternary structure, component of the RNA polymerase III (Pol III) complex consisting of 17 subunits.

The protein localises to the nucleus. The enzyme catalyses RNA(n) + a ribonucleoside 5'-triphosphate = RNA(n+1) + diphosphate. DNA-dependent RNA polymerase catalyzes the transcription of DNA into RNA using the four ribonucleoside triphosphates as substrates. Largest and catalytic core component of RNA polymerase III which synthesizes small RNAs, such as 5S rRNA and tRNAs. Forms the polymerase active center together with the second largest subunit. A single-stranded DNA template strand of the promoter is positioned within the central active site cleft of Pol III. A bridging helix emanates from RPC1 and crosses the cleft near the catalytic site and is thought to promote translocation of Pol III by acting as a ratchet that moves the RNA-DNA hybrid through the active site by switching from straight to bent conformations at each step of nucleotide addition. In Plasmodium falciparum, this protein is DNA-directed RNA polymerase III subunit RPC1.